Consider the following 472-residue polypeptide: Aspartyl/glutamyl-tRNA(Asn/Gln) amidotransferase subunit B (472 aa).

This sequence belongs to the GatB/GatE family. GatB subfamily. As to quaternary structure, heterotrimer of A, B and C subunits.

The enzyme catalyses L-glutamyl-tRNA(Gln) + L-glutamine + ATP + H2O = L-glutaminyl-tRNA(Gln) + L-glutamate + ADP + phosphate + H(+). It catalyses the reaction L-aspartyl-tRNA(Asn) + L-glutamine + ATP + H2O = L-asparaginyl-tRNA(Asn) + L-glutamate + ADP + phosphate + 2 H(+). Functionally, allows the formation of correctly charged Asn-tRNA(Asn) or Gln-tRNA(Gln) through the transamidation of misacylated Asp-tRNA(Asn) or Glu-tRNA(Gln) in organisms which lack either or both of asparaginyl-tRNA or glutaminyl-tRNA synthetases. The reaction takes place in the presence of glutamine and ATP through an activated phospho-Asp-tRNA(Asn) or phospho-Glu-tRNA(Gln). The chain is Aspartyl/glutamyl-tRNA(Asn/Gln) amidotransferase subunit B from Campylobacter jejuni subsp. jejuni serotype O:2 (strain ATCC 700819 / NCTC 11168).